The chain runs to 235 residues: Phosphoribosylaminoimidazole-succinocarboxamide synthase (235 aa).

The protein belongs to the SAICAR synthetase family.

The catalysed reaction is 5-amino-1-(5-phospho-D-ribosyl)imidazole-4-carboxylate + L-aspartate + ATP = (2S)-2-[5-amino-1-(5-phospho-beta-D-ribosyl)imidazole-4-carboxamido]succinate + ADP + phosphate + 2 H(+). It functions in the pathway purine metabolism; IMP biosynthesis via de novo pathway; 5-amino-1-(5-phospho-D-ribosyl)imidazole-4-carboxamide from 5-amino-1-(5-phospho-D-ribosyl)imidazole-4-carboxylate: step 1/2. In Streptococcus thermophilus (strain ATCC BAA-491 / LMD-9), this protein is Phosphoribosylaminoimidazole-succinocarboxamide synthase.